Here is a 571-residue protein sequence, read N- to C-terminus: Streptolysin O (571 aa).

Positions 1-33 are cleaved as a signal peptide; sequence MSNKKTFKKYSRVAGLLTVALIIGNLVTANAES. 2 disordered regions span residues 32–56 and 81–108; these read ESNKQNTASTETTTTNEQPKPESSE and KEMPLESAEKEEKKSEDKKKSEEDHTEE. Residues 37-48 show a composition bias toward low complexity; the sequence is NTASTETTTTNE. Transmembrane regions (beta stranded) follow at residues 260–273, 280–289, 358–367, and 375–387; these read KSQIEAALNVNSKI, IDFKSISKGE, SNDVEAAFSA, and KTNGKYSDILENS. The short motif at 529–539 is the Conserved undecapeptide element; sequence ECTGLAWEWWR. Position 561 (threonine 561) is a short sequence motif, cholesterol binding.

It belongs to the cholesterol-dependent cytolysin family. In terms of assembly, homooligomeric pore complex of 35 to 50 subunits; when inserted in the host membrane.

It is found in the secreted. The protein localises to the host cell membrane. In terms of biological role, a cholesterol-dependent toxin that causes cytolysis by forming pores in cholesterol containing host membranes. After binding to target membranes, the protein undergoes a major conformation change, leading to its insertion in the host membrane and formation of an oligomeric pore complex. Cholesterol is required for binding to host membranes, membrane insertion and pore formation; cholesterol binding is mediated by a Thr-Leu pair in the C-terminus. Can be reversibly inactivated by oxidation. This chain is Streptolysin O (slo), found in Streptococcus pyogenes serotype M6 (strain ATCC BAA-946 / MGAS10394).